We begin with the raw amino-acid sequence, 426 residues long: Proline--tRNA ligase (426 aa).

This sequence belongs to the class-II aminoacyl-tRNA synthetase family. ProS type 2 subfamily. As to quaternary structure, homodimer.

The protein localises to the cytoplasm. The enzyme catalyses tRNA(Pro) + L-proline + ATP = L-prolyl-tRNA(Pro) + AMP + diphosphate. Catalyzes the attachment of proline to tRNA(Pro) in a two-step reaction: proline is first activated by ATP to form Pro-AMP and then transferred to the acceptor end of tRNA(Pro). In Rickettsia africae (strain ESF-5), this protein is Proline--tRNA ligase.